Consider the following 151-residue polypeptide: Small ribosomal subunit protein uS15 (151 aa).

A phosphoserine mark is found at Ser-21 and Ser-32.

Belongs to the universal ribosomal protein uS15 family. Component of the small ribosomal subunit (SSU). Mature yeast ribosomes consist of a small (40S) and a large (60S) subunit. The 40S small subunit contains 1 molecule of ribosomal RNA (18S rRNA) and at least 33 different proteins. The large 60S subunit contains 3 rRNA molecules (25S, 5.8S and 5S rRNA) and at least 46 different proteins.

The protein resides in the cytoplasm. Component of the ribosome, a large ribonucleoprotein complex responsible for the synthesis of proteins in the cell. The small ribosomal subunit (SSU) binds messenger RNAs (mRNAs) and translates the encoded message by selecting cognate aminoacyl-transfer RNA (tRNA) molecules. The large subunit (LSU) contains the ribosomal catalytic site termed the peptidyl transferase center (PTC), which catalyzes the formation of peptide bonds, thereby polymerizing the amino acids delivered by tRNAs into a polypeptide chain. The nascent polypeptides leave the ribosome through a tunnel in the LSU and interact with protein factors that function in enzymatic processing, targeting, and the membrane insertion of nascent chains at the exit of the ribosomal tunnel. In Schizosaccharomyces pombe (strain 972 / ATCC 24843) (Fission yeast), this protein is Small ribosomal subunit protein uS15 (rps13).